Here is a 155-residue protein sequence, read N- to C-terminus: Small ribosomal subunit protein uS7cz/uS7cy (155 aa).

Belongs to the universal ribosomal protein uS7 family. As to quaternary structure, part of the 30S ribosomal subunit.

The protein localises to the plastid. Functionally, one of the primary rRNA binding proteins, it binds directly to 16S rRNA where it nucleates assembly of the head domain of the 30S subunit. The protein is Small ribosomal subunit protein uS7cz/uS7cy (rps7-A) of Cuscuta exaltata (Tall dodder).